The primary structure comprises 304 residues: Quinolinate synthase (304 aa).

Positions 23 and 40 each coordinate iminosuccinate. Cys85 is a binding site for [4Fe-4S] cluster. Iminosuccinate is bound by residues 111–113 (YIN) and Ser128. A [4Fe-4S] cluster-binding site is contributed by Cys171. Residues 197–199 (HPE) and Thr214 each bind iminosuccinate. Cys259 lines the [4Fe-4S] cluster pocket.

This sequence belongs to the quinolinate synthase family. Type 2 subfamily. [4Fe-4S] cluster serves as cofactor.

The protein resides in the cytoplasm. It catalyses the reaction iminosuccinate + dihydroxyacetone phosphate = quinolinate + phosphate + 2 H2O + H(+). Its pathway is cofactor biosynthesis; NAD(+) biosynthesis; quinolinate from iminoaspartate: step 1/1. Functionally, catalyzes the condensation of iminoaspartate with dihydroxyacetone phosphate to form quinolinate. The protein is Quinolinate synthase of Clostridioides difficile (strain 630) (Peptoclostridium difficile).